A 213-amino-acid chain; its full sequence is LexA repressor (213 aa).

The H-T-H motif DNA-binding region spans 29 to 49 (VREICNAVGFKSTSTVHSYLE). Active-site for autocatalytic cleavage activity residues include Ser-136 and Lys-173.

Belongs to the peptidase S24 family. In terms of assembly, homodimer.

The catalysed reaction is Hydrolysis of Ala-|-Gly bond in repressor LexA.. Represses a number of genes involved in the response to DNA damage (SOS response), including recA and lexA. In the presence of single-stranded DNA, RecA interacts with LexA causing an autocatalytic cleavage which disrupts the DNA-binding part of LexA, leading to derepression of the SOS regulon and eventually DNA repair. This chain is LexA repressor, found in Acetivibrio thermocellus (strain ATCC 27405 / DSM 1237 / JCM 9322 / NBRC 103400 / NCIMB 10682 / NRRL B-4536 / VPI 7372) (Clostridium thermocellum).